The sequence spans 628 residues: Glutamyl-tRNA(Gln) amidotransferase subunit E (628 aa).

The protein belongs to the GatB/GatE family. GatE subfamily. Heterodimer of GatD and GatE.

The enzyme catalyses L-glutamyl-tRNA(Gln) + L-glutamine + ATP + H2O = L-glutaminyl-tRNA(Gln) + L-glutamate + ADP + phosphate + H(+). Its function is as follows. Allows the formation of correctly charged Gln-tRNA(Gln) through the transamidation of misacylated Glu-tRNA(Gln) in organisms which lack glutaminyl-tRNA synthetase. The reaction takes place in the presence of glutamine and ATP through an activated gamma-phospho-Glu-tRNA(Gln). The GatDE system is specific for glutamate and does not act on aspartate. The protein is Glutamyl-tRNA(Gln) amidotransferase subunit E of Sulfurisphaera tokodaii (strain DSM 16993 / JCM 10545 / NBRC 100140 / 7) (Sulfolobus tokodaii).